The following is a 425-amino-acid chain: Imidazolonepropionase (425 aa).

2 residues coordinate Fe(3+): His-78 and His-80. Zn(2+) is bound by residues His-78 and His-80. Residues Arg-87, Tyr-150, and His-183 each contribute to the 4-imidazolone-5-propanoate site. Position 150 (Tyr-150) interacts with N-formimidoyl-L-glutamate. His-248 provides a ligand contact to Fe(3+). His-248 is a binding site for Zn(2+). A 4-imidazolone-5-propanoate-binding site is contributed by Gln-251. Asp-323 is a binding site for Fe(3+). A Zn(2+)-binding site is contributed by Asp-323. The N-formimidoyl-L-glutamate site is built by Asn-325 and Gly-327. Thr-328 is a 4-imidazolone-5-propanoate binding site.

This sequence belongs to the metallo-dependent hydrolases superfamily. HutI family. Requires Zn(2+) as cofactor. Fe(3+) serves as cofactor.

Its subcellular location is the cytoplasm. It catalyses the reaction 4-imidazolone-5-propanoate + H2O = N-formimidoyl-L-glutamate. The protein operates within amino-acid degradation; L-histidine degradation into L-glutamate; N-formimidoyl-L-glutamate from L-histidine: step 3/3. Functionally, catalyzes the hydrolytic cleavage of the carbon-nitrogen bond in imidazolone-5-propanoate to yield N-formimidoyl-L-glutamate. It is the third step in the universal histidine degradation pathway. The polypeptide is Imidazolonepropionase (Polaromonas sp. (strain JS666 / ATCC BAA-500)).